We begin with the raw amino-acid sequence, 462 residues long: Histidine--tRNA ligase (462 aa).

The protein belongs to the class-II aminoacyl-tRNA synthetase family. Homodimer.

The protein localises to the cytoplasm. It carries out the reaction tRNA(His) + L-histidine + ATP = L-histidyl-tRNA(His) + AMP + diphosphate + H(+). This Nostoc sp. (strain PCC 7120 / SAG 25.82 / UTEX 2576) protein is Histidine--tRNA ligase (hisS).